Consider the following 130-residue polypeptide: MARVKRAVNAQKKRRTLLATASGYRGQRSRLYRKAKEQVLHSMQYSYRDRRDRKGDFRQLWIQRINAGARANGLTYNRLIQGLKLAGVEVDRKILADLAVNDAAAFAAIVELARAAVAEQGTGGAASQAA.

It belongs to the bacterial ribosomal protein bL20 family.

Binds directly to 23S ribosomal RNA and is necessary for the in vitro assembly process of the 50S ribosomal subunit. It is not involved in the protein synthesizing functions of that subunit. In Salinispora arenicola (strain CNS-205), this protein is Large ribosomal subunit protein bL20.